We begin with the raw amino-acid sequence, 94 residues long: MTINYQFGDVDAHGAMIRALAGSLEAEHQAIISDVLTASDFWGGAGSAACQGFITQLGRNFQVIYEQANAHGQKVQAAGNNMAQTDSAVGSSWA.

The protein belongs to the WXG100 family. ESAT-6 subfamily.

The protein localises to the secreted. This Mycobacterium bovis (strain ATCC BAA-935 / AF2122/97) protein is ESAT-6-like protein EsxI.